Reading from the N-terminus, the 249-residue chain is Probable transcriptional regulatory protein aq_1575 (249 aa).

The protein belongs to the TACO1 family.

The protein resides in the cytoplasm. The protein is Probable transcriptional regulatory protein aq_1575 of Aquifex aeolicus (strain VF5).